A 486-amino-acid chain; its full sequence is Serralysin (486 aa).

Residue His187 coordinates Zn(2+). The active site involves Glu188. Positions 191 and 197 each coordinate Zn(2+). Residues Arg266, Asp269, Asp298, Gly300, Gly301, Asp303, Thr340, and Glu342 each contribute to the Ca(2+) site. Hemolysin-type calcium-binding repeat units lie at residues 345 to 362 (IGGS…ANTL) and 363 to 380 (KGGA…ADNL).

Belongs to the peptidase M10B family. Zn(2+) is required as a cofactor. Ca(2+) serves as cofactor.

The protein localises to the secreted. It catalyses the reaction Preferential cleavage of bonds with hydrophobic residues in P1'.. The sequence is that of Serralysin (prtA1) from Photorhabdus luminescens (Xenorhabdus luminescens).